Reading from the N-terminus, the 160-residue chain is H/ACA ribonucleoprotein complex subunit 2 (160 aa).

At serine 15 the chain carries Phosphoserine. Position 23 is a phosphothreonine (threonine 23).

This sequence belongs to the eukaryotic ribosomal protein eL8 family. Component of the box H/ACA small nucleolar ribonucleoprotein (H/ACA snoRNP) complex consisting of Nop60B, Gar1, NPH2 and Nop10, and associated with H/ACA-type snoRNAs.

Its subcellular location is the nucleus. The protein resides in the nucleolus. Component of the box H/ACA small nucleolar ribonucleoprotein (H/ACA snoRNP) complex, which catalyzes pseudouridylation of rRNA. This involves the isomerization of uridine such that the ribose is subsequently attached to C5, instead of the normal N1. Pseudouridine ('psi') residues may serve to stabilize the conformation of rRNAs. Required for ribosome biogenesis. H/ACA snoRNP complex-dependent ribosome biogenesis is important in female germline cell differentiation during oogenesis. This is H/ACA ribonucleoprotein complex subunit 2 from Drosophila melanogaster (Fruit fly).